The chain runs to 742 residues: Synaptic vesicle glycoprotein 2A (742 aa).

The interval 1 to 57 (MEEGFRDRAAFIRGAKDIAKEVKKHATKKVVKGLDRVQDEYSRRSYSRFEEEDDDDD) is interaction with SYT1. At 1-169 (MEEGFRDRAA…GHGRFQWTLY (169 aa)) the chain is on the cytoplasmic side. Residues 32–49 (KGLDRVQDEYSRRSYSRF) are compositionally biased toward basic and acidic residues. The tract at residues 32-144 (KGLDRVQDEY…GRGEAQRRKE (113 aa)) is disordered. Phosphoserine occurs at positions 80 and 81. Residue Thr-84 is modified to Phosphothreonine. Over residues 122–137 (VRGGLGDGEGPPGGRG) the composition is skewed to gly residues. A helical membrane pass occupies residues 170-190 (FVLGLALMADGVEVFVVGFVL). Residues 191–205 (PSAEKDMCLSDSNKG) lie on the Extracellular side of the membrane. A helical transmembrane segment spans residues 206 to 226 (MLGLIVYLGMMVGAFLWGGLA). Topologically, residues 227–233 (DRLGRRQ) are cytoplasmic. A helical transmembrane segment spans residues 234-254 (CLLISLSVNSVFAFFSSFVQG). Residues 255–262 (YGTFLFCR) are Extracellular-facing. The chain crosses the membrane as a helical span at residues 263–283 (LLSGVGIGGSIPIVFSYFSEF). Over 284–294 (LAQEKRGEHLS) the chain is Cytoplasmic. Residues 295-315 (WLCMFWMIGGVYAAAMAWAII) form a helical membrane-spanning segment. At 316 to 334 (PHYGWSFQMGSAYQFHSWR) the chain is on the extracellular side. The helical transmembrane segment at 335 to 355 (VFVLVCAFPSVFAIGALTTQP) threads the bilayer. The Cytoplasmic segment spans residues 356–447 (ESPRFFLENG…CFGPEYRRIT (92 aa)). Phosphoserine is present on Ser-393. The chain crosses the membrane as a helical span at residues 448-468 (LMMMGVWFTMSFSYYGLTVWF). Residues 469–598 (PDMIRHLQAV…GTGEGAYMVY (130 aa)) are Extracellular-facing. Tyr-480 bears the Phosphotyrosine mark. Residues Asn-498, Asn-548, and Asn-573 are each glycosylated (N-linked (GlcNAc...) asparagine). The chain crosses the membrane as a helical span at residues 599 to 619 (FVSFLGTLAVLPGNIVSALLM). Topologically, residues 620 to 626 (DKIGRLR) are cytoplasmic. The helical transmembrane segment at 627–647 (MLAGSSVMSCVSCFFLSFGNS) threads the bilayer. Topologically, residues 648–651 (ESAM) are extracellular. Residues 652–672 (IALLCLFGGVSIASWNALDVL) traverse the membrane as a helical segment. At 673 to 685 (TVELYPSDKRTTA) the chain is on the cytoplasmic side. The chain crosses the membrane as a helical span at residues 686-708 (FGFLNALCKLAAVLGISIFTSFV). At 709–712 (GITK) the chain is on the extracellular side. The helical transmembrane segment at 713 to 731 (AAPILFASAALALGSSLAL) threads the bilayer. Residues 732 to 742 (KLPETRGQVLQ) are Cytoplasmic-facing.

The protein belongs to the major facilitator superfamily. Interacts with SYT1/synaptotagmin-1 in a calcium-dependent manner. Binds the adapter protein complex AP-2. Phosphorylation by CK1 of the N-terminal cytoplasmic domain regulates interaction with SYT1. Post-translationally, N-glycosylated.

It is found in the presynapse. The protein resides in the cytoplasmic vesicle. It localises to the secretory vesicle. Its subcellular location is the synaptic vesicle membrane. Functionally, plays a role in the control of regulated secretion in neural and endocrine cells, enhancing selectively low-frequency neurotransmission. Positively regulates vesicle fusion by maintaining the readily releasable pool of secretory vesicles. The protein is Synaptic vesicle glycoprotein 2A (SV2A) of Bos taurus (Bovine).